The chain runs to 461 residues: UDP-N-acetylmuramoylalanine--D-glutamate ligase (461 aa).

Glycine 117–threonine 123 contributes to the ATP binding site.

Belongs to the MurCDEF family.

It localises to the cytoplasm. The enzyme catalyses UDP-N-acetyl-alpha-D-muramoyl-L-alanine + D-glutamate + ATP = UDP-N-acetyl-alpha-D-muramoyl-L-alanyl-D-glutamate + ADP + phosphate + H(+). Its pathway is cell wall biogenesis; peptidoglycan biosynthesis. In terms of biological role, cell wall formation. Catalyzes the addition of glutamate to the nucleotide precursor UDP-N-acetylmuramoyl-L-alanine (UMA). In Synechococcus sp. (strain CC9605), this protein is UDP-N-acetylmuramoylalanine--D-glutamate ligase.